The chain runs to 117 residues: Large ribosomal subunit protein bL19 (117 aa).

The protein belongs to the bacterial ribosomal protein bL19 family.

In terms of biological role, this protein is located at the 30S-50S ribosomal subunit interface and may play a role in the structure and function of the aminoacyl-tRNA binding site. The protein is Large ribosomal subunit protein bL19 of Mycoplasmopsis pulmonis (strain UAB CTIP) (Mycoplasma pulmonis).